The following is a 183-amino-acid chain: Small ribosomal subunit protein eS10z (183 aa).

The disordered stretch occupies residues 91-183 (LKKSARPPGR…GAGPTSSSME (93 aa)). The segment covering 109–130 (DRPRGPPRFEGDRPRFGDRDGY) has biased composition (basic and acidic residues). Composition is skewed to gly residues over residues 131-146 (RGGP…GEKG) and 161-175 (GRPG…GFGA).

Belongs to the eukaryotic ribosomal protein eS10 family.

The protein localises to the cytoplasm. This Oryza sativa subsp. japonica (Rice) protein is Small ribosomal subunit protein eS10z.